A 1351-amino-acid chain; its full sequence is Tripartite motif-containing protein 66 (1351 aa).

The B box-type 1; atypical zinc finger occupies 105–150 (MARNCSECKEKRAAHILCTYCNRWLCSSCTEEHRHSPVPGGPFFPR). Zn(2+) contacts are provided by Cys-109, Cys-112, Cys-133, His-139, Cys-169, His-172, Cys-192, and His-197. The B box-type 2 zinc finger occupies 164–205 (DFTLYCPLHTQEVLKLFCETCDMLTCHSCLVVEHKEHRCRHV). Residues 234–304 (AKQIEDRIFE…IMVLNRQFEH (71 aa)) are a coiled coil. 3 disordered regions span residues 542–608 (FGHH…CSQN), 663–730 (APVQ…VRKH), and 857–895 (CPLQ…DPSL). Residues 560–588 (QLPPPPPPLPHPPPPLPPPPQQPHPPLPP) show a composition bias toward pro residues. Positions 664–676 (PVQSQSQEETLQA) are enriched in polar residues. The span at 872-884 (TGSSSSSGRTSGS) shows a compositional bias: low complexity. Positions 995 to 999 (PYVRL) match the PxVxL motif motif. Residues 1067 to 1098 (TSLAGQRPPEVEGTSPEEHRLIPRTPGAKKGP) form a disordered region. The PHD-type zinc finger occupies 1105–1152 (EDFCAVCLNGGELLCCDRCPKVFHLSCHVPALLSFPGGEWVCTLCRSL). Residues 1176 to 1282 (GLSMYDQKKC…VFFEGWLKEI (107 aa)) enclose the Bromo domain. The interval 1289 to 1351 (AQPRQEDSDS…FRLANSISQV (63 aa)) is disordered.

As to quaternary structure, can form homodimers and heterodimers. Interacts with CBX5, CBX1 and CBX3 via PxVxL motif.

It is found in the nucleus. Functionally, may function as transcription repressor; The repressive effects are mediated, at least in part, by recruitment of deacetylase activity. May play a role as negative regulator of postmeiotic genes acting through CBX3 complex formation and centromere association. The protein is Tripartite motif-containing protein 66 (TRIM66) of Homo sapiens (Human).